The chain runs to 98 residues: NADH-ubiquinone oxidoreductase chain 4L (98 aa).

A run of 3 helical transmembrane segments spans residues 2 to 22 (PSISININLAFATALLGMLMF), 29 to 49 (SLLCLEGMMLSMFILSTLTIL), and 61 to 81 (ILLLVFAACEAAIGLALLVMV).

It belongs to the complex I subunit 4L family. As to quaternary structure, core subunit of respiratory chain NADH dehydrogenase (Complex I) which is composed of 45 different subunits.

Its subcellular location is the mitochondrion inner membrane. It carries out the reaction a ubiquinone + NADH + 5 H(+)(in) = a ubiquinol + NAD(+) + 4 H(+)(out). Its function is as follows. Core subunit of the mitochondrial membrane respiratory chain NADH dehydrogenase (Complex I) which catalyzes electron transfer from NADH through the respiratory chain, using ubiquinone as an electron acceptor. Part of the enzyme membrane arm which is embedded in the lipid bilayer and involved in proton translocation. This chain is NADH-ubiquinone oxidoreductase chain 4L (MT-ND4L), found in Microcebus simmonsi (Simmons's mouse lemur).